Here is an 89-residue protein sequence, read N- to C-terminus: Small ribosomal subunit protein uS15 (89 aa).

The protein belongs to the universal ribosomal protein uS15 family. Part of the 30S ribosomal subunit. Forms a bridge to the 50S subunit in the 70S ribosome, contacting the 23S rRNA.

In terms of biological role, one of the primary rRNA binding proteins, it binds directly to 16S rRNA where it helps nucleate assembly of the platform of the 30S subunit by binding and bridging several RNA helices of the 16S rRNA. Functionally, forms an intersubunit bridge (bridge B4) with the 23S rRNA of the 50S subunit in the ribosome. This chain is Small ribosomal subunit protein uS15, found in Photorhabdus laumondii subsp. laumondii (strain DSM 15139 / CIP 105565 / TT01) (Photorhabdus luminescens subsp. laumondii).